Here is a 737-residue protein sequence, read N- to C-terminus: Polyribonucleotide nucleotidyltransferase (737 aa).

Mg(2+) contacts are provided by D489 and D495. Positions P556–I615 constitute a KH domain. One can recognise an S1 motif domain in the interval D625–K693. The disordered stretch occupies residues S691–E737. 2 stretches are compositionally biased toward basic and acidic residues: residues P700–Y715 and P725–E737.

Belongs to the polyribonucleotide nucleotidyltransferase family. Mg(2+) is required as a cofactor.

Its subcellular location is the cytoplasm. The catalysed reaction is RNA(n+1) + phosphate = RNA(n) + a ribonucleoside 5'-diphosphate. In terms of biological role, involved in mRNA degradation. Catalyzes the phosphorolysis of single-stranded polyribonucleotides processively in the 3'- to 5'-direction. This is Polyribonucleotide nucleotidyltransferase from Streptococcus pneumoniae (strain Hungary19A-6).